Consider the following 453-residue polypeptide: MDKQQEFVIRTLEERDIRFVRLWFTDVLGFLKSVAVAPAELEQAFDEGIGFDGSAIEGFARVYESDMIAKPDPSTFQVLPWRAEAPGTARMFCDILMPDGSPSFADPRYVLKRALARTSDLGFTFYTHPEIEFFLLKDKPVDGSVPTPADNSGYFDHTPQNIGMDFRRQAITMLESMGISVEFSHHEGAPGQQEIDLRYADALSTADNVMTFRLVMKQVALEQGLQATFMPKPFSEYPGSGMHTHLSLFEGDRNAFYESGAEYQLSKVGRSFIAGLLRHAAEISAVTNQWVNSYKRIWGGTERTAGAGGEAPSYICWGHNNRSALVRVPMYKPGKTGSARVEVRSIDSGANPYLTYAVLLAAGLKGIEEGYELPPGAEDDVWALSDAERRALGIEPLPQNLGEALALMERSDLVAETLGEHVFDFFLRNKRQEWEEYRSQVTAFELRKSLPVL.

Residues 15-100 enclose the GS beta-grasp domain; it reads RDIRFVRLWF…MFCDILMPDG (86 aa). One can recognise a GS catalytic domain in the interval 107–453; the sequence is PRYVLKRALA…FELRKSLPVL (347 aa). Residues Glu130 and Glu132 each coordinate Mg(2+). Glu182 serves as a coordination point for ATP. Mg(2+)-binding residues include Glu187 and Glu194. Gly239 contributes to the L-glutamate binding site. Residue His243 coordinates Mg(2+). Residue 245–247 coordinates ATP; sequence HLS. L-glutamate-binding residues include Arg296, Glu310, and Arg322. 2 residues coordinate ATP: Arg322 and Arg327. Residue Glu342 coordinates Mg(2+). Residue Arg344 coordinates L-glutamate.

Belongs to the glutamine synthetase family. It depends on Mg(2+) as a cofactor.

The enzyme catalyses putrescine + L-glutamate + ATP = gamma-L-glutamylputrescine + ADP + phosphate + H(+). It carries out the reaction spermine + L-glutamate + ATP = gamma-L-glutamylspermine + ADP + phosphate + H(+). It catalyses the reaction spermidine + L-glutamate + ATP = gamma-L-glutamylspermidine + ADP + phosphate + H(+). The catalysed reaction is cadaverine + L-glutamate + ATP = gamma-L-glutamylcadaverine + ADP + phosphate + H(+). It participates in amine and polyamine degradation; putrescine degradation. It functions in the pathway amine and polyamine degradation; spermidine degradation. Its pathway is amine and polyamine degradation; spermine degradation. With respect to regulation, no effect on activity with glutamine synthetase (GS) inhibitor methionine sulfoximine (MSO). Involved in the catabolism of polyamines. Catalyzes the ATP-dependent gamma-glutamylation of polyamines. Substrates include putrescine, cadaverine, spermidine and spermine, with a preference for short-chain polyamine putrescine. No complementation of the L-glutamine auxotrophy of an E.coli glnA mutant. Together with GlnA3, enables survival of S.coelicolor under exposure to high local environmental polyamine concentrations, which is toxic to the cells. The polypeptide is Gamma-glutamylpolyamine synthetase GlnA2 (Streptomyces coelicolor (strain ATCC BAA-471 / A3(2) / M145)).